A 475-amino-acid polypeptide reads, in one-letter code: Aspartyl/glutamyl-tRNA(Asn/Gln) amidotransferase subunit B (475 aa).

The protein belongs to the GatB/GatE family. GatB subfamily. Heterotrimer of A, B and C subunits.

The enzyme catalyses L-glutamyl-tRNA(Gln) + L-glutamine + ATP + H2O = L-glutaminyl-tRNA(Gln) + L-glutamate + ADP + phosphate + H(+). It catalyses the reaction L-aspartyl-tRNA(Asn) + L-glutamine + ATP + H2O = L-asparaginyl-tRNA(Asn) + L-glutamate + ADP + phosphate + 2 H(+). Functionally, allows the formation of correctly charged Asn-tRNA(Asn) or Gln-tRNA(Gln) through the transamidation of misacylated Asp-tRNA(Asn) or Glu-tRNA(Gln) in organisms which lack either or both of asparaginyl-tRNA or glutaminyl-tRNA synthetases. The reaction takes place in the presence of glutamine and ATP through an activated phospho-Asp-tRNA(Asn) or phospho-Glu-tRNA(Gln). This chain is Aspartyl/glutamyl-tRNA(Asn/Gln) amidotransferase subunit B, found in Chromobacterium violaceum (strain ATCC 12472 / DSM 30191 / JCM 1249 / CCUG 213 / NBRC 12614 / NCIMB 9131 / NCTC 9757 / MK).